A 1345-amino-acid chain; its full sequence is DNA-directed RNA polymerase subunit beta' (1345 aa).

Cys60, Cys62, Cys75, and Cys78 together coordinate Zn(2+). Mg(2+) contacts are provided by Asp536, Asp538, and Asp540. 4 residues coordinate Zn(2+): Cys895, Cys974, Cys981, and Cys984. Residues 1325–1345 (DDNDNPVDFGDEFRIDPDELK) are disordered. The span at 1335–1345 (DEFRIDPDELK) shows a compositional bias: basic and acidic residues.

This sequence belongs to the RNA polymerase beta' chain family. In terms of assembly, the RNAP catalytic core consists of 2 alpha, 1 beta, 1 beta' and 1 omega subunit. When a sigma factor is associated with the core the holoenzyme is formed, which can initiate transcription. Mg(2+) is required as a cofactor. The cofactor is Zn(2+).

It catalyses the reaction RNA(n) + a ribonucleoside 5'-triphosphate = RNA(n+1) + diphosphate. In terms of biological role, DNA-dependent RNA polymerase catalyzes the transcription of DNA into RNA using the four ribonucleoside triphosphates as substrates. The polypeptide is DNA-directed RNA polymerase subunit beta' (Bifidobacterium animalis subsp. lactis (strain AD011)).